Consider the following 158-residue polypeptide: Peroxidase (158 aa).

Substrate is bound at residue Pro2. Heme b is bound at residue His32. Residue Thr33 participates in Ca(2+) binding. Cys39 and Cys64 form a disulfide bridge. Asn48 carries N-linked (GlcNAc...) asparagine glycosylation. Ca(2+)-binding residues include Asp78, Thr81, and Asp86.

It belongs to the peroxidase family. Classical plant (class III) peroxidase subfamily. Requires Ca(2+) as cofactor. Heme b serves as cofactor.

The enzyme catalyses 2 a phenolic donor + H2O2 = 2 a phenolic radical donor + 2 H2O. Removal of H(2)O(2), oxidation of toxic reductants, biosynthesis and degradation of lignin, suberization, auxin catabolism, response to environmental stresses such as wounding, pathogen attack and oxidative stress. These functions might be dependent on each isozyme/isoform in each plant tissue. The polypeptide is Peroxidase (Lupinus polyphyllus (Large-leaved lupine)).